The chain runs to 174 residues: ATP-dependent protease subunit HslV (174 aa).

Residue threonine 2 is part of the active site. Na(+) is bound by residues glycine 157, cysteine 160, and threonine 163.

The protein belongs to the peptidase T1B family. HslV subfamily. As to quaternary structure, a double ring-shaped homohexamer of HslV is capped on each side by a ring-shaped HslU homohexamer. The assembly of the HslU/HslV complex is dependent on binding of ATP.

Its subcellular location is the cytoplasm. It catalyses the reaction ATP-dependent cleavage of peptide bonds with broad specificity.. With respect to regulation, allosterically activated by HslU binding. Functionally, protease subunit of a proteasome-like degradation complex believed to be a general protein degrading machinery. In Yersinia enterocolitica serotype O:8 / biotype 1B (strain NCTC 13174 / 8081), this protein is ATP-dependent protease subunit HslV.